The sequence spans 609 residues: (R)-linalool synthase TPS5, chloroplastic (609 aa).

The N-terminal 42 residues, 1 to 42, are a transit peptide targeting the chloroplast; it reads MVSILSNIGMMVVTFKRPSLFTSLRRRSANNIIITKHSHPIS. Residues Arg325, Asp362, Asp366, Arg503, and Asp506 each coordinate (2E)-geranyl diphosphate. Mg(2+) contacts are provided by Asp362 and Asp366. Residues 362 to 366 carry the DDXXD motif motif; the sequence is DDIYD. Mg(2+)-binding residues include Asp506, Thr510, and Glu514.

The protein belongs to the terpene synthase family. Tpsb subfamily. Mg(2+) is required as a cofactor. Mn(2+) serves as cofactor. Highly expressed in young fruits and plant tops. Expressed in flower buds and trichomes of petioles and stems. Expressed at low levels in young leaves, stems, petioles, sepals and petals.

It is found in the plastid. It localises to the chloroplast. It carries out the reaction (2E)-geranyl diphosphate + H2O = (R)-linalool + diphosphate. It catalyses the reaction (2E,6E)-farnesyl diphosphate + H2O = (6E)-nerolidol + diphosphate. It participates in secondary metabolite biosynthesis; terpenoid biosynthesis. Its function is as follows. Involved in monoterpene (C10) biosynthesis in glandular trichomes. Converts geranyl diphosphate to linalool in glandular trichomes in response to jasmonate (JA). Can convert farnesyl diphosphate to nerolidol in vitro. This chain is (R)-linalool synthase TPS5, chloroplastic, found in Solanum lycopersicum (Tomato).